The chain runs to 146 residues: Large ribosomal subunit protein uL15 (146 aa).

Residues 1–13 are compositionally biased toward basic and acidic residues; the sequence is MKLHELKPAEGSR. Residues 1–59 are disordered; the sequence is MKLHELKPAEGSRKVRNRVGRGTSSGNGKTSGRGQKGQKARSGGGVRLGFEGGQTPLFR. Composition is skewed to gly residues over residues 23–35 and 42–52; these read TSSG…GRGQ and SGGGVRLGFEG.

The protein belongs to the universal ribosomal protein uL15 family. As to quaternary structure, part of the 50S ribosomal subunit.

In terms of biological role, binds to the 23S rRNA. This Streptococcus agalactiae serotype Ia (strain ATCC 27591 / A909 / CDC SS700) protein is Large ribosomal subunit protein uL15.